A 688-amino-acid chain; its full sequence is Glycine--tRNA ligase beta subunit (688 aa).

The protein belongs to the class-II aminoacyl-tRNA synthetase family. As to quaternary structure, tetramer of two alpha and two beta subunits.

The protein localises to the cytoplasm. It carries out the reaction tRNA(Gly) + glycine + ATP = glycyl-tRNA(Gly) + AMP + diphosphate. The chain is Glycine--tRNA ligase beta subunit from Lactobacillus delbrueckii subsp. bulgaricus (strain ATCC BAA-365 / Lb-18).